Here is a 464-residue protein sequence, read N- to C-terminus: Myrosinase 1 (464 aa).

Residue Q19 participates in substrate binding. Zn(2+)-binding residues include H39 and D52. The substrate site is built by H122 and N166. E167 functions as the Nucleophile in the catalytic mechanism. Residue E374 is the Proton donor of the active site. N-linked (GlcNAc...) asparagine glycosylation is present at N397.

As to quaternary structure, homodimer. As to expression, expressed in the skeletal muscle tissues surrounding the head, abdomen and thorax. Not expressed in flight muscles (at protein level).

It carries out the reaction a thioglucoside + H2O = a sugar + a thiol.. In terms of biological role, hydrolyzes glucosinolates to a labile aglycone. This rapidly undergoes spontaneous rearrangement, eliminating sulfur to yield a number of toxic metabolites. Thereby developing a chemical defense system that exploits and mimics the host plant. This is Myrosinase 1 from Brevicoryne brassicae (Mealy cabbage aphid).